Consider the following 185-residue polypeptide: Elongation factor P (185 aa).

Belongs to the elongation factor P family.

Its subcellular location is the cytoplasm. It functions in the pathway protein biosynthesis; polypeptide chain elongation. Functionally, involved in peptide bond synthesis. Stimulates efficient translation and peptide-bond synthesis on native or reconstituted 70S ribosomes in vitro. Probably functions indirectly by altering the affinity of the ribosome for aminoacyl-tRNA, thus increasing their reactivity as acceptors for peptidyl transferase. This chain is Elongation factor P, found in Desulfovibrio desulfuricans (strain ATCC 27774 / DSM 6949 / MB).